The sequence spans 60 residues: LKCNKLIPLAYKTCPAGKDLCYKMYMVSDKTVPVKRGCIDVCPKNSLLVKYECCNTDRCN.

4 disulfide bridges follow: Cys3–Cys21, Cys14–Cys38, Cys42–Cys53, and Cys54–Cys59.

It belongs to the three-finger toxin family. Short-chain subfamily. Type IA cytotoxin sub-subfamily. Monomer in solution; Homodimer and oligomer in the presence of negatively charged lipids forming a pore with a size ranging between 20 and 30 Angstroms. In terms of tissue distribution, expressed by the venom gland.

The protein resides in the secreted. Its subcellular location is the target cell membrane. Functionally, shows cytolytic activity on many different cells by forming pore in lipid membranes. In vivo, increases heart rate or kills the animal by cardiac arrest. In addition, it binds to heparin with high affinity, interacts with Kv channel-interacting protein 1 (KCNIP1) in a calcium-independent manner, and binds to integrin alpha-V/beta-3 (ITGAV/ITGB3) with moderate affinity. Has hemolytic activity towards human erythrocytes (EC(50)=0.074 uM) and cytolytic activity towards various cell lines. The sequence is that of Cytotoxin 8 from Naja naja (Indian cobra).